Here is a 207-residue protein sequence, read N- to C-terminus: Ribosomal RNA small subunit methyltransferase G (207 aa).

S-adenosyl-L-methionine-binding positions include G77, F82, E100–S102, and R141.

Belongs to the methyltransferase superfamily. RNA methyltransferase RsmG family.

It is found in the cytoplasm. In terms of biological role, specifically methylates the N7 position of a guanine in 16S rRNA. This chain is Ribosomal RNA small subunit methyltransferase G, found in Borrelia turicatae (strain 91E135).